Here is a 346-residue protein sequence, read N- to C-terminus: MQALVGAETGGYRLADNVEKPVLQPGSILCHVKAVALNPHDAKIVDYSNVPGALGGCDFAGVVVEIGNGVKRFKEGDRVFAVTFGMNASDKTAGAFTQYAVATEDLSCLIPEAMSFTEACSMGLAIATAGLALFQTPGLQLSMQGGNGEAVLVSGGATATGTMAIQFLRIAGYTPVVTCSPSNNALCESFGAEICFDYHSPTCGADIRVQTGNKLRHVLDCVVDISTMKMSYDAIGSSGGAYVALEAIPTNIKYTRRDICANWLMAPSILGTPVNKKGAYGRPSMPEHRQFGTYLFALAEKWLQDGSIKHHPIEIREGGLRSIREGIDDLRRGNVHAKKLVYPLSA.

Residue 40–43 coordinates NADP(+); sequence HDAK. Position 124–131 (124–131) interacts with substrate; it reads LAIATAGL. NADP(+) is bound by residues 157–160, 180–183, tyrosine 198, and 245–246; these read ATAT, SPSN, and LE. 266-270 is a substrate binding site; that stretch reads APSIL. Position 335–336 (335–336) interacts with NADP(+); the sequence is VH.

Belongs to the zinc-containing alcohol dehydrogenase family.

In terms of biological role, trans-enoyl reductase; part of the gene cluster that mediates the biosynthesis of fujikurins A-D, secondary metabolites playing a role during rice infection. The polyketide synthase PKS19 acts with the trans-enoyl reductase FFUJ_12240 and the polyketide transferase FFUJ_12241 to produce fujikurins, however, the biosynthesis pathway has not been identified yet. This is Trans-enoyl reductase FFUJ_12240 from Gibberella fujikuroi (strain CBS 195.34 / IMI 58289 / NRRL A-6831) (Bakanae and foot rot disease fungus).